Consider the following 1001-residue polypeptide: Open rectifier potassium channel protein 1 (1001 aa).

Residues 1–6 (MSPNRW) lie on the Cytoplasmic side of the membrane. The helical transmembrane segment at 7–27 (ILLLIFYISYLMFGAAIYYHI) threads the bilayer. Asn58 is a glycosylation site (N-linked (GlcNAc...) asparagine). The segment at residues 95–111 (AFFFAFTVCSTVGYGNI) is an intramembrane region (pore-forming). Residues 120 to 140 (MIMIAYSVIGIPVNGILFAGL) traverse the membrane as a helical segment. The Cytoplasmic segment spans residues 141 to 170 (GEYFGRTFEAIYRRYKKYKMSTDMHYVPPQ). The helical transmembrane segment at 171-191 (LGLITTVVIALIPGIALFLLL) threads the bilayer. An intramembrane region (pore-forming) is located at residues 208 to 224 (LYYSYVTTTTIGFGDYV). A helical transmembrane segment spans residues 244-264 (IFVIVWFIFSLGYLVMIMTFI). At 265–1001 (TRGLQSKKLA…TGSSGAPAEK (737 aa)) the chain is on the cytoplasmic side. 4 positions are modified to phosphoserine: Ser332, Ser373, Ser562, and Ser565. The segment at 591–668 (SQSYLRNGRG…QAPSARRGSM (78 aa)) is disordered. Phosphoserine is present on residues Ser685, Ser691, and Ser715. 2 disordered regions span residues 768 to 795 (GGAA…EPPQ) and 830 to 1001 (SPTG…PAEK). Over residues 832-841 (TGGAATAPAA) the composition is skewed to low complexity. Positions 855-873 (AANQSQITAGPSNAPTVQS) are enriched in polar residues. The span at 911–926 (RRLSLRPSPLARELSP) shows a compositional bias: low complexity. The segment covering 961 to 983 (RPSTSSTHSPLSRIVQISQAQRK) has biased composition (polar residues). The segment covering 984–1001 (SSMPSAAATGSSGAPAEK) has biased composition (low complexity).

The protein belongs to the two pore domain potassium channel (TC 1.A.1.8) family. Widespread expression in adult, strongest expression in muscle, brain and ovary. Also present at low levels in larva and embryo.

The protein resides in the membrane. In terms of biological role, background potassium channel. Rectification is dependent on external potassium concentration. Acts as an outwardly rectifying channel but as external potassium levels increase, this is reversed. The protein is Open rectifier potassium channel protein 1 (Ork1) of Drosophila melanogaster (Fruit fly).